Here is a 235-residue protein sequence, read N- to C-terminus: Phosphoribosylaminoimidazole-succinocarboxamide synthase (235 aa).

This sequence belongs to the SAICAR synthetase family.

The catalysed reaction is 5-amino-1-(5-phospho-D-ribosyl)imidazole-4-carboxylate + L-aspartate + ATP = (2S)-2-[5-amino-1-(5-phospho-beta-D-ribosyl)imidazole-4-carboxamido]succinate + ADP + phosphate + 2 H(+). The protein operates within purine metabolism; IMP biosynthesis via de novo pathway; 5-amino-1-(5-phospho-D-ribosyl)imidazole-4-carboxamide from 5-amino-1-(5-phospho-D-ribosyl)imidazole-4-carboxylate: step 1/2. The protein is Phosphoribosylaminoimidazole-succinocarboxamide synthase of Sulfolobus acidocaldarius (strain ATCC 33909 / DSM 639 / JCM 8929 / NBRC 15157 / NCIMB 11770).